A 39-amino-acid polypeptide reads, in one-letter code: Photosystem I reaction center subunit IX (39 aa).

Residues 4–24 (FLTTAPVVAAIWFTLTAGILI) form a helical membrane-spanning segment.

It belongs to the PsaJ family.

The protein resides in the cellular thylakoid membrane. In terms of biological role, may help in the organization of the PsaE and PsaF subunits. The chain is Photosystem I reaction center subunit IX from Synechococcus sp. (strain CC9311).